The sequence spans 281 residues: Pantothenate synthetase (281 aa).

ATP is bound at residue 30-37 (MGYLHEGH). H37 serves as the catalytic Proton donor. Position 61 (Q61) interacts with (R)-pantoate. Q61 lines the beta-alanine pocket. 147–150 (GQKD) is an ATP binding site. Residue Q153 participates in (R)-pantoate binding. ATP is bound by residues V176 and 184-187 (MSSR).

This sequence belongs to the pantothenate synthetase family. As to quaternary structure, homodimer.

It is found in the cytoplasm. It catalyses the reaction (R)-pantoate + beta-alanine + ATP = (R)-pantothenate + AMP + diphosphate + H(+). It participates in cofactor biosynthesis; (R)-pantothenate biosynthesis; (R)-pantothenate from (R)-pantoate and beta-alanine: step 1/1. Catalyzes the condensation of pantoate with beta-alanine in an ATP-dependent reaction via a pantoyl-adenylate intermediate. The sequence is that of Pantothenate synthetase from Acetivibrio thermocellus (strain ATCC 27405 / DSM 1237 / JCM 9322 / NBRC 103400 / NCIMB 10682 / NRRL B-4536 / VPI 7372) (Clostridium thermocellum).